A 211-amino-acid chain; its full sequence is Glycerol-3-phosphate acyltransferase (211 aa).

The next 4 membrane-spanning stretches (helical) occupy residues 5–25 (ALGMMLIAYLCGSISSAILFC), 80–100 (PLYLGLTAIAACLGHIYPVFF), 112–132 (FGAIAPIGWDLTGLMTGTWLL), and 138–158 (GYSSLGAIVSALIAPFYVWWF).

The protein belongs to the PlsY family. In terms of assembly, probably interacts with PlsX.

It is found in the cell inner membrane. It carries out the reaction an acyl phosphate + sn-glycerol 3-phosphate = a 1-acyl-sn-glycero-3-phosphate + phosphate. It participates in lipid metabolism; phospholipid metabolism. In terms of biological role, catalyzes the transfer of an acyl group from acyl-phosphate (acyl-PO(4)) to glycerol-3-phosphate (G3P) to form lysophosphatidic acid (LPA). This enzyme utilizes acyl-phosphate as fatty acyl donor, but not acyl-CoA or acyl-ACP. In Pectobacterium carotovorum subsp. carotovorum (strain PC1), this protein is Glycerol-3-phosphate acyltransferase.